The primary structure comprises 413 residues: Alpha-1-antitrypsin-like protein GS55-MS (413 aa).

An N-terminal signal peptide occupies residues 1–24 (MPSSISWGLLLLAGLSCLVAGSLA). 3 N-linked (GlcNAc...) asparagine glycosylation sites follow: asparagine 65, asparagine 102, and asparagine 266. Residues 368-387 (GATFLEMMPMSLPPEVKFDK) form an RCL region.

This sequence belongs to the serpin family.

It localises to the secreted. In terms of biological role, inhibitor of serine proteases. Its primary target is elastase, but it also has a moderate affinity for plasmin and thrombin. The protein is Alpha-1-antitrypsin-like protein GS55-MS of Ictidomys tridecemlineatus (Thirteen-lined ground squirrel).